The chain runs to 531 residues: Peptide chain release factor 3 (531 aa).

One can recognise a tr-type G domain in the interval 13 to 282 (AKRRTFAIIS…TLIEHAPPPK (270 aa)). GTP is bound by residues 22-29 (SHPDAGKT), 90-94 (DTPGH), and 144-147 (NKLD).

It belongs to the TRAFAC class translation factor GTPase superfamily. Classic translation factor GTPase family. PrfC subfamily.

Its subcellular location is the cytoplasm. Its function is as follows. Increases the formation of ribosomal termination complexes and stimulates activities of RF-1 and RF-2. It binds guanine nucleotides and has strong preference for UGA stop codons. It may interact directly with the ribosome. The stimulation of RF-1 and RF-2 is significantly reduced by GTP and GDP, but not by GMP. The protein is Peptide chain release factor 3 of Psychrobacter sp. (strain PRwf-1).